The sequence spans 153 residues: 6,7-dimethyl-8-ribityllumazine synthase (153 aa).

5-amino-6-(D-ribitylamino)uracil contacts are provided by residues F21, 55 to 57 (AFE), and 79 to 81 (TVI). 84 to 85 (AT) contributes to the (2S)-2-hydroxy-3-oxobutyl phosphate binding site. Residue H87 is the Proton donor of the active site. F112 is a binding site for 5-amino-6-(D-ribitylamino)uracil. R126 serves as a coordination point for (2S)-2-hydroxy-3-oxobutyl phosphate.

The protein belongs to the DMRL synthase family. Forms an icosahedral capsid composed of 60 subunits, arranged as a dodecamer of pentamers.

It carries out the reaction (2S)-2-hydroxy-3-oxobutyl phosphate + 5-amino-6-(D-ribitylamino)uracil = 6,7-dimethyl-8-(1-D-ribityl)lumazine + phosphate + 2 H2O + H(+). Its pathway is cofactor biosynthesis; riboflavin biosynthesis; riboflavin from 2-hydroxy-3-oxobutyl phosphate and 5-amino-6-(D-ribitylamino)uracil: step 1/2. In terms of biological role, catalyzes the formation of 6,7-dimethyl-8-ribityllumazine by condensation of 5-amino-6-(D-ribitylamino)uracil with 3,4-dihydroxy-2-butanone 4-phosphate. This is the penultimate step in the biosynthesis of riboflavin. This chain is 6,7-dimethyl-8-ribityllumazine synthase, found in Bacillus cereus (strain AH187).